A 220-amino-acid polypeptide reads, in one-letter code: MEQGDKQATYNELETEQPVSKEGADSQPEDEAIGAASEHADAQAGENPEAASTTADPAEQTSVEAEELAKAKAQVAELEEKLAEMEKRYLRLYADFENFRRRARQEMEAAEKYRAQSLASDLLPVLDNFERALKIETENEQAKSILQGVEMVYRSLLDALRKEGVEVIEAVGKPFDPHLHQAVMQTDEGGYEPNTVVEELQKGYKLKDRILRPAMVKVSQ.

Composition is skewed to polar residues over residues 1 to 12 (MEQGDKQATYNE) and 50 to 63 (AASTTADPAEQTSV). The tract at residues 1–67 (MEQGDKQATY…AEQTSVEAEE (67 aa)) is disordered.

Belongs to the GrpE family. In terms of assembly, homodimer.

The protein localises to the cytoplasm. Functionally, participates actively in the response to hyperosmotic and heat shock by preventing the aggregation of stress-denatured proteins, in association with DnaK and GrpE. It is the nucleotide exchange factor for DnaK and may function as a thermosensor. Unfolded proteins bind initially to DnaJ; upon interaction with the DnaJ-bound protein, DnaK hydrolyzes its bound ATP, resulting in the formation of a stable complex. GrpE releases ADP from DnaK; ATP binding to DnaK triggers the release of the substrate protein, thus completing the reaction cycle. Several rounds of ATP-dependent interactions between DnaJ, DnaK and GrpE are required for fully efficient folding. This Geobacillus thermodenitrificans (strain NG80-2) protein is Protein GrpE.